Consider the following 2078-residue polypeptide: Autophagy-related protein 2 homolog B (2078 aa).

Residues 13 to 108 (ACRYLLQRYL…EMVFRPRPRP (96 aa)) enclose the Chorein N-terminal domain. A phosphoserine mark is found at Ser255 and Ser379. Residues 473-495 (GSTFPSNLVHPTPLQKTSLPSRS) are disordered. Residues 486–495 (LQKTSLPSRS) are compositionally biased toward polar residues. Phosphoserine occurs at positions 497, 840, 886, 899, and 1008. Positions 868–888 (EEEENDGHYQEEEEGGAHSLK) are disordered. Basic and acidic residues predominate over residues 873 to 888 (DGHYQEEEEGGAHSLK). The residue at position 1012 (Tyr1012) is a Phosphotyrosine. 2 positions are modified to phosphoserine: Ser1016 and Ser1018. Thr1022 carries the post-translational modification Phosphothreonine. The interval 1375–1405 (ADMKPGAFQRRSKVDSSGRSSSRGPVLPEAD) is disordered. Position 1526 is a phosphoserine (Ser1526).

The protein belongs to the ATG2 family. Interacts with WDR45/WIPI4.

It localises to the preautophagosomal structure membrane. The protein resides in the lipid droplet. It is found in the endoplasmic reticulum membrane. It catalyses the reaction a 1,2-diacyl-sn-glycero-3-phospho-L-serine(in) = a 1,2-diacyl-sn-glycero-3-phospho-L-serine(out). The catalysed reaction is a 1,2-diacyl-sn-glycero-3-phosphoethanolamine(in) = a 1,2-diacyl-sn-glycero-3-phosphoethanolamine(out). Its function is as follows. Lipid transfer protein required for both autophagosome formation and regulation of lipid droplet morphology and dispersion. Tethers the edge of the isolation membrane (IM) to the endoplasmic reticulum (ER) and mediates direct lipid transfer from ER to IM for IM expansion. Binds to the ER exit site (ERES), which is the membrane source for autophagosome formation, and extracts phospholipids from the membrane source and transfers them to ATG9 (ATG9A or ATG9B) to the IM for membrane expansion. Lipid transfer activity is enhanced by WDR45/WIPI4, which promotes ATG2B-association with phosphatidylinositol 3-monophosphate (PI3P)-containing membranes. The protein is Autophagy-related protein 2 homolog B of Homo sapiens (Human).